Consider the following 735-residue polypeptide: E3 UFM1-protein ligase 1 homolog (735 aa).

The tract at residues 389–445 is disordered; the sequence is RLEAEKKKQGGAKAAVKVQEETDDWGDGKKGGKGGKKNAKSVKGGSKSSAPSTSSNL. Basic residues predominate over residues 419 to 428; that stretch reads GGKGGKKNAK. A compositionally biased stretch (low complexity) spans 429 to 445; the sequence is SVKGGSKSSAPSTSSNL.

This sequence belongs to the UFL1 family.

E3 UFM1-protein ligase that mediates ufmylation of target proteins. This is E3 UFM1-protein ligase 1 homolog (ufl-1) from Caenorhabditis elegans.